We begin with the raw amino-acid sequence, 127 residues long: Glycine cleavage system H protein (127 aa).

Residues 22 to 104 enclose the Lipoyl-binding domain; sequence KVRIGITDFA…YEKAWMIVIE (83 aa). Lys-63 carries the post-translational modification N6-lipoyllysine.

Belongs to the GcvH family. As to quaternary structure, the glycine cleavage system is composed of four proteins: P, T, L and H. It depends on (R)-lipoate as a cofactor.

Functionally, the glycine cleavage system catalyzes the degradation of glycine. The H protein shuttles the methylamine group of glycine from the P protein to the T protein. Is also involved in protein lipoylation via its role as an octanoyl/lipoyl carrier protein intermediate. This Geobacillus thermodenitrificans (strain NG80-2) protein is Glycine cleavage system H protein.